A 343-amino-acid chain; its full sequence is Protein RecA (343 aa).

68 to 75 (GPESGGKT) is an ATP binding site.

This sequence belongs to the RecA family.

It is found in the cytoplasm. Functionally, can catalyze the hydrolysis of ATP in the presence of single-stranded DNA, the ATP-dependent uptake of single-stranded DNA by duplex DNA, and the ATP-dependent hybridization of homologous single-stranded DNAs. It interacts with LexA causing its activation and leading to its autocatalytic cleavage. In Syntrophus aciditrophicus (strain SB), this protein is Protein RecA.